A 161-amino-acid chain; its full sequence is C-type lectin lectoxin-Lio3 (161 aa).

The N-terminal stretch at 1–23 (MRRFIFMSLGLLVLAFSLSGIGA) is a signal peptide. 3 cysteine pairs are disulfide-bonded: Cys27-Cys38, Cys55-Cys154, and Cys129-Cys146. Positions 34-155 (HNISCYKLFT…CGLLHYFICQ (122 aa)) constitute a C-type lectin domain. Asn35 is a glycosylation site (N-linked (GlcNAc...) asparagine). Positions 117–119 (KGE) match the Mannose-binding motif. Glu127, Asn142, and Asp143 together coordinate Ca(2+).

It belongs to the true venom lectin family. In terms of tissue distribution, expressed by the venom gland.

It is found in the secreted. Its function is as follows. Mannose-binding lectin which recognizes specific carbohydrate structures and agglutinates a variety of animal cells by binding to cell-surface glycoproteins and glycolipids. May be a calcium-dependent lectin. The chain is C-type lectin lectoxin-Lio3 from Erythrolamprus poecilogyrus (Water snake).